The following is a 226-amino-acid chain: Ribonuclease 3 (226 aa).

Residues 7–129 form the RNase III domain; the sequence is LPRLCRTLSY…IIGAVYLDSD (123 aa). A Mg(2+)-binding site is contributed by glutamate 42. Aspartate 46 is a catalytic residue. Mg(2+) is bound by residues aspartate 115 and glutamate 118. The active site involves glutamate 118. In terms of domain architecture, DRBM spans 156-226; sequence DAKTLLQEHL…AAQVLELLKK (71 aa).

This sequence belongs to the ribonuclease III family. In terms of assembly, homodimer. It depends on Mg(2+) as a cofactor.

It is found in the cytoplasm. The catalysed reaction is Endonucleolytic cleavage to 5'-phosphomonoester.. In terms of biological role, digests double-stranded RNA. Involved in the processing of primary rRNA transcript to yield the immediate precursors to the large and small rRNAs (23S and 16S). Processes some mRNAs, and tRNAs when they are encoded in the rRNA operon. Processes pre-crRNA and tracrRNA of type II CRISPR loci if present in the organism. This chain is Ribonuclease 3, found in Shewanella baltica (strain OS223).